The sequence spans 194 residues: ATP-dependent Clp protease proteolytic subunit 3 (194 aa).

Serine 96 functions as the Nucleophile in the catalytic mechanism. Histidine 121 is an active-site residue.

This sequence belongs to the peptidase S14 family. Fourteen ClpP subunits assemble into 2 heptameric rings which stack back to back to give a disk-like structure with a central cavity, resembling the structure of eukaryotic proteasomes.

It is found in the cytoplasm. It catalyses the reaction Hydrolysis of proteins to small peptides in the presence of ATP and magnesium. alpha-casein is the usual test substrate. In the absence of ATP, only oligopeptides shorter than five residues are hydrolyzed (such as succinyl-Leu-Tyr-|-NHMec, and Leu-Tyr-Leu-|-Tyr-Trp, in which cleavage of the -Tyr-|-Leu- and -Tyr-|-Trp bonds also occurs).. Its function is as follows. Cleaves peptides in various proteins in a process that requires ATP hydrolysis. Has a chymotrypsin-like activity. Plays a major role in the degradation of misfolded proteins. This chain is ATP-dependent Clp protease proteolytic subunit 3, found in Prochlorococcus marinus (strain NATL2A).